Here is a 95-residue protein sequence, read N- to C-terminus: UPF0213 protein YPA_2977 (95 aa).

In terms of domain architecture, GIY-YIG spans 4 to 79 (SLWHLYLLRT…KQLSKQQKEK (76 aa)).

This sequence belongs to the UPF0213 family.

The chain is UPF0213 protein YPA_2977 from Yersinia pestis bv. Antiqua (strain Antiqua).